The primary structure comprises 184 residues: ATP synthase subunit b, chloroplastic (184 aa).

The chain crosses the membrane as a helical span at residues 31-53 (LINLSVVLGVLIYFGKGVLSNLL).

Belongs to the ATPase B chain family. In terms of assembly, F-type ATPases have 2 components, F(1) - the catalytic core - and F(0) - the membrane proton channel. F(1) has five subunits: alpha(3), beta(3), gamma(1), delta(1), epsilon(1). F(0) has four main subunits: a(1), b(1), b'(1) and c(10-14). The alpha and beta chains form an alternating ring which encloses part of the gamma chain. F(1) is attached to F(0) by a central stalk formed by the gamma and epsilon chains, while a peripheral stalk is formed by the delta, b and b' chains.

It localises to the plastid. It is found in the chloroplast thylakoid membrane. In terms of biological role, f(1)F(0) ATP synthase produces ATP from ADP in the presence of a proton or sodium gradient. F-type ATPases consist of two structural domains, F(1) containing the extramembraneous catalytic core and F(0) containing the membrane proton channel, linked together by a central stalk and a peripheral stalk. During catalysis, ATP synthesis in the catalytic domain of F(1) is coupled via a rotary mechanism of the central stalk subunits to proton translocation. Its function is as follows. Component of the F(0) channel, it forms part of the peripheral stalk, linking F(1) to F(0). The chain is ATP synthase subunit b, chloroplastic from Cycas taitungensis (Prince sago).